We begin with the raw amino-acid sequence, 210 residues long: Na(+)-translocating NADH-quinone reductase subunit D (210 aa).

Helical transmembrane passes span 14-34, 42-62, 72-92, 103-123, 131-151, and 178-198; these read PIVNNNPIALQVLGVCSALAV, LVMALALTAVTAFSNLFISMI, IIVQMTIIASLVIVVDQLLQA, VFVGLIITNCIVMGRAEAYAM, FMDGIGNGLGYGAILLAVGFV, and NGLLLLPPSAFFLIGILIWII.

Belongs to the NqrDE/RnfAE family. As to quaternary structure, composed of six subunits; NqrA, NqrB, NqrC, NqrD, NqrE and NqrF.

It is found in the cell inner membrane. It carries out the reaction a ubiquinone + n Na(+)(in) + NADH + H(+) = a ubiquinol + n Na(+)(out) + NAD(+). Its function is as follows. NQR complex catalyzes the reduction of ubiquinone-1 to ubiquinol by two successive reactions, coupled with the transport of Na(+) ions from the cytoplasm to the periplasm. NqrA to NqrE are probably involved in the second step, the conversion of ubisemiquinone to ubiquinol. This Shewanella sp. (strain ANA-3) protein is Na(+)-translocating NADH-quinone reductase subunit D.